We begin with the raw amino-acid sequence, 372 residues long: MKYDLIIIGSGSVGAAAGYYATRAGLNVLMTDAHMPPHQHGSHHGDTRLIRHAYGEGEKYVPLVLRAQMLWDELSRHNEDDPIFVRSGVINLGPADSAFLANVAHSAEQWQLNVEKLDAQGIMARWPEIRVPDNYIGLFETDSGFLRSELAIKTWIQLAKEAGCAQLFNCPVTAIRHDDDGVTIETADGEYQAKKAIVCAGTWVKDLLPELPVQPVRKVFAWYQADGRYSVKNKFPAFTGELPNGDQYYGFPAENDALKIGKHNGGQIIHSADERVPFAEVVSDGSEAFPFLRNVLPGIGCCLYGAACTYDNSPDEDFIIDTLPAHDNTLLITGLSGHGFKFASVLGEIAADFAQDKKSDFDLTPFRLSRFQ.

An FAD-binding site is contributed by 4-34 (DLIIIGSGSVGAAAGYYATRAGLNVLMTDAH). Cys-308 bears the S-8alpha-FAD cysteine mark.

Belongs to the MSOX/MTOX family. MTOX subfamily. Monomer. It depends on FAD as a cofactor.

It catalyses the reaction N(alpha)-methyl-L-tryptophan + O2 + H2O = L-tryptophan + formaldehyde + H2O2. Functionally, catalyzes the oxidative demethylation of N-methyl-L-tryptophan. The polypeptide is N-methyl-L-tryptophan oxidase (Escherichia coli O7:K1 (strain IAI39 / ExPEC)).